A 267-amino-acid chain; its full sequence is Glucosamine-6-phosphate deaminase (267 aa).

Asp-76 acts as the Proton acceptor; for enolization step in catalysis. Asp-145 acts as the For ring-opening step in catalysis. The active-site Proton acceptor; for ring-opening step is the His-147. Glu-152 functions as the For ring-opening step in the catalytic mechanism.

The protein belongs to the glucosamine/galactosamine-6-phosphate isomerase family. As to quaternary structure, homohexamer.

The protein resides in the cytoplasm. The enzyme catalyses alpha-D-glucosamine 6-phosphate + H2O = beta-D-fructose 6-phosphate + NH4(+). It participates in nucleotide-sugar biosynthesis; UDP-N-acetyl-alpha-D-glucosamine biosynthesis; alpha-D-glucosamine 6-phosphate from D-fructose 6-phosphate: step 1/1. Functionally, catalyzes the reversible conversion of alpha-D-glucosamine 6-phosphate (GlcN-6P) into beta-D-fructose 6-phosphate (Fru-6P) and ammonium ion, a regulatory reaction step in de novo uridine diphosphate-N-acetyl-alpha-D-glucosamine (UDP-GlcNAc) biosynthesis via hexosamine pathway. This is Glucosamine-6-phosphate deaminase from Dictyostelium discoideum (Social amoeba).